A 73-amino-acid polypeptide reads, in one-letter code: Disintegrin lutosin (73 aa).

One can recognise a Disintegrin domain in the interval 1 to 73; the sequence is EAGEECDCGS…ADCPRNGLYG (73 aa). 6 disulfides stabilise this stretch: Cys6–Cys21, Cys8–Cys16, Cys15–Cys38, Cys29–Cys35, Cys34–Cys59, and Cys47–Cys66. Residues 51–53 carry the Cell attachment site motif; it reads RGD.

It belongs to the venom metalloproteinase (M12B) family. P-II subfamily. P-IIa sub-subfamily. As to quaternary structure, monomer (disintegrin). Expressed by the venom gland.

It is found in the secreted. Functionally, inhibits fibrinogen interaction with platelets. Acts by binding to alpha-IIb/beta-3 (ITGA2B/ITGB3) on the platelet surface and inhibits aggregation induced by ADP, thrombin, platelet-activating factor and collagen. The protein is Disintegrin lutosin of Crotalus lutosus (Great basin rattlesnake).